A 221-amino-acid chain; its full sequence is 2-phospho-L-lactate guanylyltransferase (221 aa).

It belongs to the CofC family. In terms of assembly, homodimer.

The catalysed reaction is (2S)-2-phospholactate + GTP + H(+) = (2S)-lactyl-2-diphospho-5'-guanosine + diphosphate. It functions in the pathway cofactor biosynthesis; coenzyme F420 biosynthesis. Guanylyltransferase that catalyzes the activation of (2S)-2-phospholactate (2-PL) as (2S)-lactyl-2-diphospho-5'-guanosine, via the condensation of 2-PL with GTP. It is involved in the biosynthesis of coenzyme F420, a hydride carrier cofactor. In Methanothrix thermoacetophila (strain DSM 6194 / JCM 14653 / NBRC 101360 / PT) (Methanosaeta thermophila), this protein is 2-phospho-L-lactate guanylyltransferase.